Reading from the N-terminus, the 546-residue chain is 2-isopropylmalate synthase (546 aa).

Positions 5-274 (ITIFDTTLRD…TADVHTEHLT (270 aa)) constitute a Pyruvate carboxyltransferase domain. Mn(2+) contacts are provided by aspartate 14, histidine 209, histidine 211, and asparagine 245. The regulatory domain stretch occupies residues 415-546 (RLDQFSVHLS…QNGIMHTYGE (132 aa)).

The protein belongs to the alpha-IPM synthase/homocitrate synthase family. LeuA type 1 subfamily. Homodimer. The cofactor is Mn(2+).

The protein resides in the cytoplasm. The catalysed reaction is 3-methyl-2-oxobutanoate + acetyl-CoA + H2O = (2S)-2-isopropylmalate + CoA + H(+). It participates in amino-acid biosynthesis; L-leucine biosynthesis; L-leucine from 3-methyl-2-oxobutanoate: step 1/4. Functionally, catalyzes the condensation of the acetyl group of acetyl-CoA with 3-methyl-2-oxobutanoate (2-ketoisovalerate) to form 3-carboxy-3-hydroxy-4-methylpentanoate (2-isopropylmalate). The chain is 2-isopropylmalate synthase from Salinibacter ruber (strain M8).